The primary structure comprises 354 residues: Glyceraldehyde-3-phosphate dehydrogenase (354 aa).

NAD(+) contacts are provided by residues 11–12 and glycine 108; that span reads TI. Residue 137-139 coordinates D-glyceraldehyde 3-phosphate; that stretch reads SCN. Cysteine 138 acts as the Nucleophile in catalysis. An NAD(+)-binding site is contributed by arginine 166. Residue 192–193 coordinates D-glyceraldehyde 3-phosphate; it reads HG. Glutamine 299 is a binding site for NAD(+).

It belongs to the glyceraldehyde-3-phosphate dehydrogenase family. As to quaternary structure, homotetramer.

It is found in the cytoplasm. The enzyme catalyses D-glyceraldehyde 3-phosphate + phosphate + NADP(+) = (2R)-3-phospho-glyceroyl phosphate + NADPH + H(+). It carries out the reaction D-glyceraldehyde 3-phosphate + phosphate + NAD(+) = (2R)-3-phospho-glyceroyl phosphate + NADH + H(+). It participates in carbohydrate degradation; glycolysis; pyruvate from D-glyceraldehyde 3-phosphate: step 1/5. The polypeptide is Glyceraldehyde-3-phosphate dehydrogenase (Haloarcula marismortui (strain ATCC 43049 / DSM 3752 / JCM 8966 / VKM B-1809) (Halobacterium marismortui)).